We begin with the raw amino-acid sequence, 435 residues long: MTTNEEFIRTQIFGTVFEITNRYNDLNPVGMGAFGLVCSATDTLTSQPVAIKKIMKPFSTAVLAKRTYRELKLLKHLRHENLICLQDIFLSPLEDIYFVTELQGTDLHRLLQTRPLEKQFVQYFLYQILRGLKYVHSAGVIHRDLKPSNILINENCDLKICDFGLARIQDPQMTGYVSTRYYRAPEIMLTWQKYDVEVDIWSAGCIFAEMIEGKPLFPGKDHVHQFSIITDLLGSPPKDVINTICSENTLKFVTSLPHRDPIPFSERFKTVEPDAVDLLEKMLVFDPKKRITAADALAHPYSAPYHDPTDEPVADAKFDWHFNDADLPVDTWRVMMYSEILDFHKIGGSDGQIDISATFDDQVAAATAAAAQAQAQAQAQVQLNMAAHSHNGAGTTGNDHSDIAGGNKVSDHVAANDTITDYGNQAIQYANEFQQ.

Thr2 is subject to N-acetylthreonine. Residues 23 to 302 enclose the Protein kinase domain; the sequence is YNDLNPVGMG…AADALAHPYS (280 aa). ATP contacts are provided by residues 29-37 and Lys52; that span reads VGMGAFGLV. The active-site Proton acceptor is the Asp144. Arsenite is bound by residues Cys156 and Cys161. Thr174 is modified (phosphothreonine; by PBS2). Residues 174–176 carry the TXY motif; it reads TGY. Tyr176 bears the Phosphotyrosine; by PBS2 mark. Position 205 (Cys205) interacts with arsenite.

Belongs to the protein kinase superfamily. Ser/Thr protein kinase family. MAP kinase subfamily. HOG1 sub-subfamily. In terms of assembly, interacts with CDC37, HOT1, KIN28, PTP2, PTP3, RBP1, RCK2, RPD3, SIC1, SMP1 and SIN4. Mg(2+) is required as a cofactor. Activated by PBS2-mediated concomitant phosphorylation at Thr-174 and Tyr-176. In terms of processing, dually phosphorylated on Thr-174 and Tyr-176, which activates the enzyme.

The protein resides in the cytoplasm. Its subcellular location is the nucleus. The enzyme catalyses L-seryl-[protein] + ATP = O-phospho-L-seryl-[protein] + ADP + H(+). It carries out the reaction L-threonyl-[protein] + ATP = O-phospho-L-threonyl-[protein] + ADP + H(+). With respect to regulation, activated by tyrosine and threonine phosphorylation. Inactivated by dephosphorylation via recruitment of PTC1 to the PBS2-HOG1 complex after adaptation to osmotic stress. PTP2 and PTP3 inactivate HOG1 by dephosphorylating Tyr-176, while the PP2Cs PTC1 and PTC2 or PTC3 dephosphorylate Thr-174 in the activation loop. In terms of biological role, proline-directed serine/threonine-protein kinase involved in a signal transduction pathway that is activated by changes in the osmolarity of the extracellular environment. Controls osmotic regulation of transcription via the stress response element (STRE) in promoters of target genes. Upon osmotic shock, associates with the SKO1-SSN6-TUP1 complex, phosphorylates SKO1, and converts it into an activator that subsequently recruits Swi/Snf and SAGA complexes. Activates the SMP1 transcription factor and the RCK2 kinase, both also involved in the regulation of the expression of a subset of osmotic stress-related genes. Phosphorylation of HSL1 by HOG1 leads to a G2 arrest essential for cell survival at high osmolarity. Also mediates cell-cycle arrest in G1 phase by the dual targeting of SIC1. Phosphorylates methyltransferase DOT1 at least on 'Ser-565' and 'Thr-576'. Regulates MFA2 ARE-mediated translation in response to carbon source. Targets RPD3 histone deacetylase to osmoresponsive promoters to induce gene expression on stress. Required for the Golgi apparatus localization of MNN1. Plays an essential role in maintaining water homeostasis, arsenite detoxification, copper-resistance, cold-resistance, hydrogen peroxide response, adaptation to citric acid stress, and repression of the mating pathway activity. Functions as an arsenic sensor and effector via direct binding to arsenic and subsequent phosphorylation of the ARR1 transcription factor. This is Mitogen-activated protein kinase HOG1 (HOG1) from Saccharomyces cerevisiae (strain ATCC 204508 / S288c) (Baker's yeast).